We begin with the raw amino-acid sequence, 226 residues long: ATP synthase F(0) complex subunit a (226 aa).

A run of 6 helical transmembrane segments spans residues 6 to 26, 68 to 88, 97 to 117, 138 to 158, 164 to 184, and 189 to 209; these read FASFITPTMMGFPIVVAIIMF, WTLMIVSLIMFIGSTNLLGLL, QLSMNLSMAIPLWAGAVITGF, IPMLIIIETISLFIQPMALAV, ITAGHLLMHLIGGATLVLMNI, and ATITFIILLLLTILEFAVALI.

Belongs to the ATPase A chain family. In terms of assembly, component of the ATP synthase complex composed at least of ATP5F1A/subunit alpha, ATP5F1B/subunit beta, ATP5MC1/subunit c (homooctomer), MT-ATP6/subunit a, MT-ATP8/subunit 8, ATP5ME/subunit e, ATP5MF/subunit f, ATP5MG/subunit g, ATP5MK/subunit k, ATP5MJ/subunit j, ATP5F1C/subunit gamma, ATP5F1D/subunit delta, ATP5F1E/subunit epsilon, ATP5PF/subunit F6, ATP5PB/subunit b, ATP5PD/subunit d, ATP5PO/subunit OSCP. ATP synthase complex consists of a soluble F(1) head domain (subunits alpha(3) and beta(3)) - the catalytic core - and a membrane F(0) domain - the membrane proton channel (subunits c, a, 8, e, f, g, k and j). These two domains are linked by a central stalk (subunits gamma, delta, and epsilon) rotating inside the F1 region and a stationary peripheral stalk (subunits F6, b, d, and OSCP). Interacts with DNAJC30; interaction is direct.

The protein resides in the mitochondrion inner membrane. It carries out the reaction H(+)(in) = H(+)(out). In terms of biological role, subunit a, of the mitochondrial membrane ATP synthase complex (F(1)F(0) ATP synthase or Complex V) that produces ATP from ADP in the presence of a proton gradient across the membrane which is generated by electron transport complexes of the respiratory chain. ATP synthase complex consist of a soluble F(1) head domain - the catalytic core - and a membrane F(1) domain - the membrane proton channel. These two domains are linked by a central stalk rotating inside the F(1) region and a stationary peripheral stalk. During catalysis, ATP synthesis in the catalytic domain of F(1) is coupled via a rotary mechanism of the central stalk subunits to proton translocation. With the subunit c (ATP5MC1), forms the proton-conducting channel in the F(0) domain, that contains two crucial half-channels (inlet and outlet) that facilitate proton movement from the mitochondrial intermembrane space (IMS) into the matrix. Protons are taken up via the inlet half-channel and released through the outlet half-channel, following a Grotthuss mechanism. This chain is ATP synthase F(0) complex subunit a, found in Mus musculus (Mouse).